The primary structure comprises 421 residues: Testin (421 aa).

The region spanning 92 to 199 (MILTNPVAAK…GDVKLPCEMD (108 aa)) is the PET domain. LIM zinc-binding domains are found at residues 234-297 (YSCY…CDSE), 299-359 (PRCA…NHAV), and 362-421 (QGCH…KRMS).

This sequence belongs to the prickle / espinas / testin family. Interacts via LIM domain 1 with ZYX. Interacts (via LIM domain 3) with ENAH and VASP. Interacts with ALKBH4, talin, actin, alpha-actinin, GRIP1 and PXN. Interacts (via LIM domain 2) with ACTL7A (via N-terminus). Heterodimer with ACTL7A; the heterodimer interacts with ENAH to form a heterotrimer.

The protein resides in the cytoplasm. It is found in the cell junction. The protein localises to the focal adhesion. In terms of biological role, scaffold protein that may play a role in cell adhesion, cell spreading and in the reorganization of the actin cytoskeleton. Plays a role in the regulation of cell proliferation. May act as a tumor suppressor. In Nomascus leucogenys (Northern white-cheeked gibbon), this protein is Testin (TES).